The primary structure comprises 186 residues: UPF0340 protein SZO_02480 (186 aa).

Belongs to the UPF0340 family.

The chain is UPF0340 protein SZO_02480 from Streptococcus equi subsp. zooepidemicus (strain H70).